We begin with the raw amino-acid sequence, 157 residues long: Polyferredoxin protein VhcB (157 aa).

4Fe-4S ferredoxin-type domains lie at 23–52 (NGIS…VVNP), 62–92 (KTER…MGKI), and 100–129 (DRIE…LNEE). Cysteine 32, cysteine 35, cysteine 38, cysteine 42, cysteine 72, cysteine 75, cysteine 78, cysteine 82, cysteine 109, cysteine 112, cysteine 115, cysteine 119, cysteine 136, cysteine 139, cysteine 142, and cysteine 146 together coordinate [4Fe-4S] cluster.

[4Fe-4S] cluster is required as a cofactor.

This chain is Polyferredoxin protein VhcB (vhcB), found in Methanococcus voltae.